Consider the following 538-residue polypeptide: Eukaryotic translation initiation factor 3 subunit L (538 aa).

Positions 305–513 constitute a PCI domain; sequence TFSDILLYIQ…IHIADTKVSH (209 aa).

It belongs to the eIF-3 subunit L family. Component of the eukaryotic translation initiation factor 3 (eIF-3) complex. The eIF-3 complex interacts with pix.

It localises to the cytoplasm. Its function is as follows. Component of the eukaryotic translation initiation factor 3 (eIF-3) complex, which is involved in protein synthesis of a specialized repertoire of mRNAs and, together with other initiation factors, stimulates binding of mRNA and methionyl-tRNAi to the 40S ribosome. The eIF-3 complex specifically targets and initiates translation of a subset of mRNAs involved in cell proliferation. The sequence is that of Eukaryotic translation initiation factor 3 subunit L from Drosophila virilis (Fruit fly).